A 140-amino-acid chain; its full sequence is Large ribosomal subunit protein uL22 (140 aa).

This sequence belongs to the universal ribosomal protein uL22 family. As to quaternary structure, part of the 50S ribosomal subunit.

This protein binds specifically to 23S rRNA; its binding is stimulated by other ribosomal proteins, e.g. L4, L17, and L20. It is important during the early stages of 50S assembly. It makes multiple contacts with different domains of the 23S rRNA in the assembled 50S subunit and ribosome. Its function is as follows. The globular domain of the protein is located near the polypeptide exit tunnel on the outside of the subunit, while an extended beta-hairpin is found that lines the wall of the exit tunnel in the center of the 70S ribosome. This Parafrankia sp. (strain EAN1pec) protein is Large ribosomal subunit protein uL22.